The primary structure comprises 161 residues: 2-C-methyl-D-erythritol 2,4-cyclodiphosphate synthase (161 aa).

A divalent metal cation is bound by residues Asp-11 and His-13. 4-CDP-2-C-methyl-D-erythritol 2-phosphate contacts are provided by residues 11-13 (DIH) and 37-38 (HS). An a divalent metal cation-binding site is contributed by His-45. Residues 59–61 (DIG), 135–138 (TTNE), and Arg-145 each bind 4-CDP-2-C-methyl-D-erythritol 2-phosphate.

It belongs to the IspF family. In terms of assembly, homotrimer. It depends on a divalent metal cation as a cofactor.

It carries out the reaction 4-CDP-2-C-methyl-D-erythritol 2-phosphate = 2-C-methyl-D-erythritol 2,4-cyclic diphosphate + CMP. It functions in the pathway isoprenoid biosynthesis; isopentenyl diphosphate biosynthesis via DXP pathway; isopentenyl diphosphate from 1-deoxy-D-xylulose 5-phosphate: step 4/6. Functionally, involved in the biosynthesis of isopentenyl diphosphate (IPP) and dimethylallyl diphosphate (DMAPP), two major building blocks of isoprenoid compounds. Catalyzes the conversion of 4-diphosphocytidyl-2-C-methyl-D-erythritol 2-phosphate (CDP-ME2P) to 2-C-methyl-D-erythritol 2,4-cyclodiphosphate (ME-CPP) with a corresponding release of cytidine 5-monophosphate (CMP). This is 2-C-methyl-D-erythritol 2,4-cyclodiphosphate synthase from Cyanothece sp. (strain PCC 7425 / ATCC 29141).